The primary structure comprises 390 residues: tRNA-specific 2-thiouridylase MnmA (390 aa).

ATP is bound by residues 29–36 and L55; that span reads GLSGGVDS. The active-site Nucleophile is C116. Cysteines 116 and 225 form a disulfide. G141 provides a ligand contact to ATP. Residues 175–177 form an interaction with tRNA region; it reads KDQ. C225 serves as the catalytic Cysteine persulfide intermediate. Residues 330–331 are interaction with tRNA; it reads RY.

It belongs to the MnmA/TRMU family.

The protein localises to the cytoplasm. The enzyme catalyses S-sulfanyl-L-cysteinyl-[protein] + uridine(34) in tRNA + AH2 + ATP = 2-thiouridine(34) in tRNA + L-cysteinyl-[protein] + A + AMP + diphosphate + H(+). In terms of biological role, catalyzes the 2-thiolation of uridine at the wobble position (U34) of tRNA, leading to the formation of s(2)U34. In Prochlorococcus marinus (strain MIT 9515), this protein is tRNA-specific 2-thiouridylase MnmA.